The following is a 394-amino-acid chain: Putative serine protease HhoA (394 aa).

The first 24 residues, 1–24 (MKYPTWLRRIGGYLLAFAVGTAFG), serve as a signal peptide directing secretion. One can recognise a PDZ domain in the interval 293 to 377 (MMNITVDQAQ…ALKLDLLRGD (85 aa)).

Belongs to the peptidase S1C family.

Its subcellular location is the periplasm. Functionally, a putative protease, its function overlaps that of the related putative proteases HhoB and HtrA. The protein is Putative serine protease HhoA (hhoA) of Synechocystis sp. (strain ATCC 27184 / PCC 6803 / Kazusa).